The sequence spans 152 residues: 6,7-dimethyl-8-ribityllumazine synthase (152 aa).

5-amino-6-(D-ribitylamino)uracil contacts are provided by residues phenylalanine 18, 49–51 (ALE), and 75–77 (CVI). A (2S)-2-hydroxy-3-oxobutyl phosphate-binding site is contributed by 80–81 (ET). Histidine 83 (proton donor) is an active-site residue. Residue asparagine 108 coordinates 5-amino-6-(D-ribitylamino)uracil. Arginine 122 provides a ligand contact to (2S)-2-hydroxy-3-oxobutyl phosphate.

The protein belongs to the DMRL synthase family.

The catalysed reaction is (2S)-2-hydroxy-3-oxobutyl phosphate + 5-amino-6-(D-ribitylamino)uracil = 6,7-dimethyl-8-(1-D-ribityl)lumazine + phosphate + 2 H2O + H(+). It functions in the pathway cofactor biosynthesis; riboflavin biosynthesis; riboflavin from 2-hydroxy-3-oxobutyl phosphate and 5-amino-6-(D-ribitylamino)uracil: step 1/2. Functionally, catalyzes the formation of 6,7-dimethyl-8-ribityllumazine by condensation of 5-amino-6-(D-ribitylamino)uracil with 3,4-dihydroxy-2-butanone 4-phosphate. This is the penultimate step in the biosynthesis of riboflavin. The protein is 6,7-dimethyl-8-ribityllumazine synthase of Bartonella bacilliformis (strain ATCC 35685 / KC583 / Herrer 020/F12,63).